Consider the following 170-residue polypeptide: Phosphopantetheine adenylyltransferase (170 aa).

T17 provides a ligand contact to substrate. ATP contacts are provided by residues 17-18 (TF) and H25. K49, L81, and R95 together coordinate substrate. ATP is bound by residues 96–98 (GLR), E106, and 131–137 (LMYISST).

This sequence belongs to the bacterial CoaD family. Homohexamer. The cofactor is Mg(2+).

The protein localises to the cytoplasm. It carries out the reaction (R)-4'-phosphopantetheine + ATP + H(+) = 3'-dephospho-CoA + diphosphate. Its pathway is cofactor biosynthesis; coenzyme A biosynthesis; CoA from (R)-pantothenate: step 4/5. Functionally, reversibly transfers an adenylyl group from ATP to 4'-phosphopantetheine, yielding dephospho-CoA (dPCoA) and pyrophosphate. The sequence is that of Phosphopantetheine adenylyltransferase from Legionella pneumophila subsp. pneumophila (strain Philadelphia 1 / ATCC 33152 / DSM 7513).